The sequence spans 236 residues: SERTA domain-containing protein 1 (236 aa).

The 48-residue stretch at 38–85 (PTVASSSLFDLSVVKLHHSLRQSEPDLRHLVLVVNTLRRIQASMEPAP) folds into the SERTA domain. The tract at residues 190-211 (ASEGLKPGPENGPAKEEPPELD) is disordered.

As to quaternary structure, interacts with the PHD-bromodomain of TIF1, TRIM28/TIF1B and p300/CBP. Interacts with E2F1 and TFDP1; modulates transactivation activity of TFDP1/E2F complexes. Also interacts with CDK4. Polyubiquitinated, which promotes proteasomal degradation. As to expression, detected at in testis, lung and, at lower levels, in muscle, liver, spleen, brain and heart.

In terms of biological role, acts at E2F-responsive promoters as coregulator to integrate signals provided by PHD- and/or bromodomain-containing transcription factors. Stimulates E2F1/TFDP1 transcriptional activity. Renders the activity of cyclin D1/CDK4 resistant to the inhibitory effects of CDKN2A/p16INK4A. The sequence is that of SERTA domain-containing protein 1 (Sertad1) from Mus musculus (Mouse).